Consider the following 126-residue polypeptide: Small ribosomal subunit protein uS12 (126 aa).

Residue D89 is modified to 3-methylthioaspartic acid.

It belongs to the universal ribosomal protein uS12 family. As to quaternary structure, part of the 30S ribosomal subunit. Contacts proteins S8 and S17. May interact with IF1 in the 30S initiation complex.

Functionally, with S4 and S5 plays an important role in translational accuracy. In terms of biological role, interacts with and stabilizes bases of the 16S rRNA that are involved in tRNA selection in the A site and with the mRNA backbone. Located at the interface of the 30S and 50S subunits, it traverses the body of the 30S subunit contacting proteins on the other side and probably holding the rRNA structure together. The combined cluster of proteins S8, S12 and S17 appears to hold together the shoulder and platform of the 30S subunit. This chain is Small ribosomal subunit protein uS12, found in Carboxydothermus hydrogenoformans (strain ATCC BAA-161 / DSM 6008 / Z-2901).